The chain runs to 417 residues: Autophagy-related protein 18 (417 aa).

4 WD repeats span residues 1–36, 76–114, 185–225, and 230–269; these read MSMNFVTFNQDYSYLAVGTSKGFRIFTTDPFGKSYE, ELTFPTTVLAIRLNRKRLVIVLEDQIYIYDIQTMKLVYT, AHKS…KLYQ, and SMPSRIYSMSFNITSTLLCVSSATETIHIFKLGQQQGLSK. The short motif at 226–230 is the L/FRRG motif element; it reads FRRGS. Residues 267 to 300 form a disordered region; the sequence is LSKTSSPSRKLESSRGSGDESAVESASSEMSSRK. A compositionally biased stretch (low complexity) spans 285-296; that stretch reads DESAVESASSEM. WD repeat units lie at residues 300 to 346 and 355 to 395; these read KHNG…AWIK and GGSG…GGEG.

It belongs to the WD repeat PROPPIN family. As to quaternary structure, component of the PI(3,5)P2 regulatory complex.

It localises to the preautophagosomal structure membrane. Its subcellular location is the vacuole membrane. The protein localises to the endosome membrane. In terms of biological role, the PI(3,5)P2 regulatory complex regulates both the synthesis and turnover of phosphatidylinositol 3,5-bisphosphate (PtdIns(3,5)P2). Necessary for proper vacuole morphology. Plays an important role in osmotically-induced vacuole fragmentation. Required for cytoplasm to vacuole transport (Cvt) vesicle formation, pexophagy and starvation-induced autophagy. Involved in correct ATG9 trafficking to the pre-autophagosomal structure. Might also be involved in premeiotic DNA replication. This chain is Autophagy-related protein 18 (ATG18), found in Coccidioides immitis (strain RS) (Valley fever fungus).